The primary structure comprises 454 residues: uncharacterized protein (454 aa).

One can recognise an HNH domain in the interval 364-405; it reads CSRPGCDAPAYHSEVHHVTPWTTTHRTDINDLTLACGPDNRL.

It belongs to the Rv1128c/1148c/1588c/1702c/1945/3466 family.

This is an uncharacterized protein from Mycobacterium tuberculosis (strain CDC 1551 / Oshkosh).